Reading from the N-terminus, the 559-residue chain is Glycerol kinase (559 aa).

Thr20 is a binding site for ADP. Residues Thr20, Ser21, and Ser22 each coordinate ATP. Thr20 is a sn-glycerol 3-phosphate binding site. Arg24 contributes to the ADP binding site. Positions 94, 95, and 148 each coordinate sn-glycerol 3-phosphate. Arg94, Glu95, and Tyr148 together coordinate glycerol. Residue Gly252 coordinates beta-D-fructose 1,6-bisphosphate. Asp265 serves as a coordination point for sn-glycerol 3-phosphate. Residues Asp265 and Gln266 each contribute to the glycerol site. ADP-binding residues include Thr287, Gly332, Gly433, and Asn437. Residues Thr287, Gly332, and Gly433 each contribute to the ATP site. Residues 532–552 (IFCSLPLGFFIVSSMVMLIGA) traverse the membrane as a helical segment.

Belongs to the FGGY kinase family. In terms of tissue distribution, widely expressed in fetal and adult tissues. The sole isoform expressed in adult liver and kidney.

Its subcellular location is the mitochondrion outer membrane. The protein localises to the nucleus. The protein resides in the cytoplasm. It is found in the cytosol. The catalysed reaction is glycerol + ATP = sn-glycerol 3-phosphate + ADP + H(+). The protein operates within polyol metabolism; glycerol degradation via glycerol kinase pathway; sn-glycerol 3-phosphate from glycerol: step 1/1. Potassium and magnesium-dependent. Its function is as follows. Kinase that plays a key role in glycerol metabolism, catalyzing its phosphorylation to produce sn-glycerol 3-phosphate. Sn-glycerol 3-phosphate is a crucial intermediate in various metabolic pathways, such as the synthesis of glycerolipids and triglycerides, glycogenesis, glycolysis and gluconeogenesis. The sequence is that of Glycerol kinase from Homo sapiens (Human).